Here is a 304-residue protein sequence, read N- to C-terminus: Aspartate carbamoyltransferase catalytic subunit (304 aa).

Carbamoyl phosphate contacts are provided by arginine 49 and threonine 50. Lysine 77 is a binding site for L-aspartate. 3 residues coordinate carbamoyl phosphate: arginine 99, histidine 127, and glutamine 130. Residues arginine 160 and arginine 211 each coordinate L-aspartate. Positions 252 and 253 each coordinate carbamoyl phosphate.

This sequence belongs to the aspartate/ornithine carbamoyltransferase superfamily. ATCase family. In terms of assembly, heterododecamer (2C3:3R2) of six catalytic PyrB chains organized as two trimers (C3), and six regulatory PyrI chains organized as three dimers (R2).

The catalysed reaction is carbamoyl phosphate + L-aspartate = N-carbamoyl-L-aspartate + phosphate + H(+). It participates in pyrimidine metabolism; UMP biosynthesis via de novo pathway; (S)-dihydroorotate from bicarbonate: step 2/3. Functionally, catalyzes the condensation of carbamoyl phosphate and aspartate to form carbamoyl aspartate and inorganic phosphate, the committed step in the de novo pyrimidine nucleotide biosynthesis pathway. The polypeptide is Aspartate carbamoyltransferase catalytic subunit (Bacillus cereus (strain G9842)).